Reading from the N-terminus, the 173-residue chain is Photosystem I assembly protein Ycf3 (173 aa).

TPR repeat units lie at residues 35-68 (AFAY…EDDP), 72-105 (SYIL…NPRM), and 120-153 (GEKA…APNN).

Belongs to the Ycf3 family.

Its subcellular location is the cellular thylakoid membrane. Functionally, essential for the assembly of the photosystem I (PSI) complex. May act as a chaperone-like factor to guide the assembly of the PSI subunits. This Trichodesmium erythraeum (strain IMS101) protein is Photosystem I assembly protein Ycf3.